Here is a 491-residue protein sequence, read N- to C-terminus: Transcriptional regulatory protein dep1 (491 aa).

Disordered regions lie at residues 1–74 (MTEN…LPSQ) and 155–301 (NSVE…DDEK). Residues 10–20 (IPHEILPKEPF) are compositionally biased toward basic and acidic residues. Composition is skewed to polar residues over residues 54–63 (ALSNPETNAN) and 155–171 (NSVE…TIVS). Positions 175-186 (KESDFESEEKAT) are enriched in basic and acidic residues. The segment covering 187 to 196 (NDNNGLIETN) has biased composition (polar residues). Ser204 bears the Phosphoserine mark. The span at 205–215 (SEHEEEEDEES) shows a compositional bias: acidic residues. Basic and acidic residues-rich tracts occupy residues 216–227 (NIERTEDSDHQI) and 282–301 (REIA…DDEK). Position 223 is a phosphoserine (Ser223).

As to quaternary structure, component of the RPD3C(L) complex.

The protein localises to the nucleus. In terms of biological role, component of the RPD3C(L) histone deacetylase complex (HDAC) responsible for the deacetylation of lysine residues on the N-terminal part of the core histones (H2A, H2B, H3 and H4). Histone deacetylation gives a tag for epigenetic repression and plays an important role in transcriptional regulation, cell cycle progression and developmental events. The chain is Transcriptional regulatory protein dep1 (dep1) from Schizosaccharomyces pombe (strain 972 / ATCC 24843) (Fission yeast).